The sequence spans 266 residues: Non-structural maintenance of chromosomes element 1 homolog (266 aa).

Residues 1–102 (MQGNTRRTGV…SVSKMASDFA (102 aa)) are interaction with NSMCE3. The RING-type; atypical zinc-finger motif lies at 191 to 232 (CNICRSLLIQGQSCETCGIRMHLPCVAKYFQSSSEPHCPHCN). The span at 243-252 (FDPEKERETG) shows a compositional bias: basic and acidic residues. The disordered stretch occupies residues 243-266 (FDPEKERETGMSRSNKRPSRSRQH). Over residues 256-266 (SNKRPSRSRQH) the composition is skewed to basic residues.

It belongs to the NSE1 family. In terms of assembly, component of the SMC5-SMC6 complex which consists at least of SMC5, SMC6, NSMCE2, NSMCE1, NSMCE4A or EID3 and NSMCE3. NSMCE1, NSMCE4A or EID3 and NSMCE3 probably form a subcomplex that bridges the head domains of the SMC5-SMC6 heterodimer. Interacts with NSMCE3. Post-translationally, ubiquitinated.

It is found in the nucleus. It localises to the chromosome. The protein localises to the telomere. It catalyses the reaction S-ubiquitinyl-[E2 ubiquitin-conjugating enzyme]-L-cysteine + [acceptor protein]-L-lysine = [E2 ubiquitin-conjugating enzyme]-L-cysteine + N(6)-ubiquitinyl-[acceptor protein]-L-lysine.. In terms of biological role, RING-type zinc finger-containing E3 ubiquitin ligase that assembles with melanoma antigen protein (MAGE) to catalyze the direct transfer of ubiquitin from E2 ubiquitin-conjugating enzyme to a specific substrate. Within MAGE-RING ubiquitin ligase complex, MAGE stimulates and specifies ubiquitin ligase activity likely through recruitment and/or stabilization of the E2 ubiquitin-conjugating enzyme at the E3:substrate complex. Involved in maintenance of genome integrity, DNA damage response and DNA repair. NSMCE3/MAGEG1 and NSMCE1 ubiquitin ligase are components of SMC5-SMC6 complex and may positively regulate homologous recombination-mediated DNA repair. The polypeptide is Non-structural maintenance of chromosomes element 1 homolog (NSMCE1) (Bos taurus (Bovine)).